The chain runs to 552 residues: 5'-AMP-activated protein kinase catalytic subunit alpha-2 (552 aa).

A Protein kinase domain is found at 16 to 268; that stretch reads YVLGDTLGVG…IKDIREHEWF (253 aa). ATP-binding positions include 22–30 and Lys-45; that span reads LGVGTFGKV. Residue Asp-139 is the Proton acceptor of the active site. At Thr-172 the chain carries Phosphothreonine; by LKB1 and CaMKK2. Thr-258 is subject to Phosphothreonine. Residues 291–376 form an AIS region; that stretch reads EAVKEVCEKF…PERMPPLIAD (86 aa). Phosphoserine is present on Ser-377. The disordered stretch occupies residues 477-521; sequence VEQRSGSSTPQRSCSAAGLHRPRSSFDSTTAESHSLSGSLTGSLT. Polar residues predominate over residues 480–490; sequence RSGSSTPQRSC. Ser-491 carries the post-translational modification Phosphoserine. Residues 501–510 show a composition bias toward polar residues; it reads SFDSTTAESH. The segment covering 511-521 has biased composition (low complexity); it reads SLSGSLTGSLT.

It belongs to the protein kinase superfamily. CAMK Ser/Thr protein kinase family. SNF1 subfamily. In terms of assembly, AMPK is a heterotrimer of an alpha catalytic subunit (PRKAA1 or PRKAA2), a beta (PRKAB1 or PRKAB2) and a gamma non-catalytic subunits (PRKAG1, PRKAG2 or PRKAG3). Interacts with FNIP1 and FNIP2. Interacts with DUSP29. Interacts with ARF6. The phosphorylated form at Thr-172 mediated by CamKK2 interacts with ACSS2. It depends on Mg(2+) as a cofactor. Post-translationally, ubiquitinated. Phosphorylated at Thr-172 by STK11/LKB1 in complex with STE20-related adapter-alpha (STRADA) pseudo kinase and CAB39. Also phosphorylated at Thr-172 by CAMKK2; triggered by a rise in intracellular calcium ions, without detectable changes in the AMP/ATP ratio. CAMKK1 can also phosphorylate Thr-172, but at much lower level. Dephosphorylated by protein phosphatase 2A and 2C (PP2A and PP2C). Phosphorylated by ULK1; leading to negatively regulate AMPK activity and suggesting the existence of a regulatory feedback loop between ULK1 and AMPK. Dephosphorylated by PPM1A and PPM1B at Thr-172 (mediated by STK11/LKB1).

The protein resides in the cytoplasm. It is found in the nucleus. The enzyme catalyses L-seryl-[protein] + ATP = O-phospho-L-seryl-[protein] + ADP + H(+). It catalyses the reaction L-threonyl-[protein] + ATP = O-phospho-L-threonyl-[protein] + ADP + H(+). The catalysed reaction is L-seryl-[acetyl-CoA carboxylase] + ATP = O-phospho-L-seryl-[acetyl-CoA carboxylase] + ADP + H(+). It carries out the reaction L-seryl-[3-hydroxy-3-methylglutaryl-coenzyme A reductase] + ATP = O-phospho-L-seryl-[3-hydroxy-3-methylglutaryl-coenzyme A reductase] + ADP + H(+). With respect to regulation, activated by phosphorylation on Thr-172. Binding of AMP to non-catalytic gamma subunit (PRKAG1, PRKAG2 or PRKAG3) results in allosteric activation, inducing phosphorylation on Thr-172. AMP-binding to gamma subunit also sustains activity by preventing dephosphorylation of Thr-172. ADP also stimulates Thr-172 phosphorylation, without stimulating already phosphorylated AMPK. ATP promotes dephosphorylation of Thr-172, rendering the enzyme inactive. Under physiological conditions AMPK mainly exists in its inactive form in complex with ATP, which is much more abundant than AMP. Selectively inhibited by compound C (6-[4-(2-Piperidin-1-yl-ethoxy)-phenyl)]-3-pyridin-4-yl-pyyrazolo[1,5-a] pyrimidine. Activated by resveratrol, a natural polyphenol present in red wine, and S17834, a synthetic polyphenol. Salicylate/aspirin directly activates kinase activity, primarily by inhibiting Thr-172 dephosphorylation. Its function is as follows. Catalytic subunit of AMP-activated protein kinase (AMPK), an energy sensor protein kinase that plays a key role in regulating cellular energy metabolism. In response to reduction of intracellular ATP levels, AMPK activates energy-producing pathways and inhibits energy-consuming processes: inhibits protein, carbohydrate and lipid biosynthesis, as well as cell growth and proliferation. AMPK acts via direct phosphorylation of metabolic enzymes, and by longer-term effects via phosphorylation of transcription regulators. Regulates lipid synthesis by phosphorylating and inactivating lipid metabolic enzymes such as ACACA, ACACB, GYS1, HMGCR and LIPE; regulates fatty acid and cholesterol synthesis by phosphorylating acetyl-CoA carboxylase (ACACA and ACACB) and hormone-sensitive lipase (LIPE) enzymes, respectively. Promotes lipolysis of lipid droplets by mediating phosphorylation of isoform 1 of CHKA (CHKalpha2). Regulates insulin-signaling and glycolysis by phosphorylating IRS1, PFKFB2 and PFKFB3. Involved in insulin receptor/INSR internalization. AMPK stimulates glucose uptake in muscle by increasing the translocation of the glucose transporter SLC2A4/GLUT4 to the plasma membrane, possibly by mediating phosphorylation of TBC1D4/AS160. Regulates transcription and chromatin structure by phosphorylating transcription regulators involved in energy metabolism such as CRTC2/TORC2, FOXO3, histone H2B, HDAC5, MEF2C, MLXIPL/ChREBP, EP300, HNF4A, p53/TP53, SREBF1, SREBF2 and PPARGC1A. Acts as a key regulator of glucose homeostasis in liver by phosphorylating CRTC2/TORC2, leading to CRTC2/TORC2 sequestration in the cytoplasm. In response to stress, phosphorylates 'Ser-36' of histone H2B (H2BS36ph), leading to promote transcription. Acts as a key regulator of cell growth and proliferation by phosphorylating FNIP1, TSC2, RPTOR, WDR24 and ATG1/ULK1: in response to nutrient limitation, negatively regulates the mTORC1 complex by phosphorylating RPTOR component of the mTORC1 complex and by phosphorylating and activating TSC2. Also phosphorylates and inhibits GATOR2 subunit WDR24 in response to nutrient limitation, leading to suppress glucose-mediated mTORC1 activation. In response to energetic stress, phosphorylates FNIP1, inactivating the non-canonical mTORC1 signaling, thereby promoting nuclear translocation of TFEB and TFE3, and inducing transcription of lysosomal or autophagy genes. In response to nutrient limitation, promotes autophagy by phosphorylating and activating ATG1/ULK1. In that process also activates WDR45/WIPI4. Phosphorylates CASP6, thereby preventing its autoprocessing and subsequent activation. AMPK also acts as a regulator of circadian rhythm by mediating phosphorylation of CRY1, leading to destabilize it. May regulate the Wnt signaling pathway by phosphorylating CTNNB1, leading to stabilize it. Also acts as a regulator of cellular polarity by remodeling the actin cytoskeleton; probably by indirectly activating myosin. Also phosphorylates CFTR, EEF2K, KLC1, NOS3 and SLC12A1. Plays an important role in the differential regulation of pro-autophagy (composed of PIK3C3, BECN1, PIK3R4 and UVRAG or ATG14) and non-autophagy (composed of PIK3C3, BECN1 and PIK3R4) complexes, in response to glucose starvation. Can inhibit the non-autophagy complex by phosphorylating PIK3C3 and can activate the pro-autophagy complex by phosphorylating BECN1. Upon glucose starvation, promotes ARF6 activation in a kinase-independent manner leading to cell migration. Upon glucose deprivation mediates the phosphorylation of ACSS2 at 'Ser-659', which exposes the nuclear localization signal of ACSS2, required for its interaction with KPNA1 and nuclear translocation. Upon stress, regulates mitochondrial fragmentation through phosphorylation of MTFR1L. The protein is 5'-AMP-activated protein kinase catalytic subunit alpha-2 (PRKAA2) of Pongo abelii (Sumatran orangutan).